Here is a 415-residue protein sequence, read N- to C-terminus: Gamma-glutamyl phosphate reductase (415 aa).

It belongs to the gamma-glutamyl phosphate reductase family.

The protein resides in the cytoplasm. The catalysed reaction is L-glutamate 5-semialdehyde + phosphate + NADP(+) = L-glutamyl 5-phosphate + NADPH + H(+). The protein operates within amino-acid biosynthesis; L-proline biosynthesis; L-glutamate 5-semialdehyde from L-glutamate: step 2/2. Its function is as follows. Catalyzes the NADPH-dependent reduction of L-glutamate 5-phosphate into L-glutamate 5-semialdehyde and phosphate. The product spontaneously undergoes cyclization to form 1-pyrroline-5-carboxylate. The polypeptide is Gamma-glutamyl phosphate reductase (Dictyoglomus thermophilum (strain ATCC 35947 / DSM 3960 / H-6-12)).